The following is a 297-amino-acid chain: Bilin biosynthesis protein MpeU (297 aa).

It belongs to the CpcE/RpcE/PecE family.

In terms of biological role, an enzyme involved in the biosynthesis of bilin. The chain is Bilin biosynthesis protein MpeU (mpeU) from Synechococcus sp. (strain WH8020).